The sequence spans 346 residues: Dihydroorotate dehydrogenase (quinone) (346 aa).

FMN contacts are provided by residues 62–66 (AGMDK) and Thr-86. Lys-66 contacts substrate. 111–115 (NRMGF) is a binding site for substrate. FMN-binding residues include Asn-142 and Asn-175. Residue Asn-175 participates in substrate binding. Ser-178 functions as the Nucleophile in the catalytic mechanism. Residue Asn-180 participates in substrate binding. Positions 211 and 239 each coordinate FMN. 240-241 (NT) contributes to the substrate binding site. FMN contacts are provided by residues Gly-261, Gly-289, and 310–311 (YT).

Belongs to the dihydroorotate dehydrogenase family. Type 2 subfamily. In terms of assembly, monomer. FMN is required as a cofactor.

The protein localises to the cell membrane. The catalysed reaction is (S)-dihydroorotate + a quinone = orotate + a quinol. Its pathway is pyrimidine metabolism; UMP biosynthesis via de novo pathway; orotate from (S)-dihydroorotate (quinone route): step 1/1. Functionally, catalyzes the conversion of dihydroorotate to orotate with quinone as electron acceptor. This is Dihydroorotate dehydrogenase (quinone) from Thermus thermophilus (strain ATCC BAA-163 / DSM 7039 / HB27).